Reading from the N-terminus, the 318-residue chain is tRNA uridine(34) hydroxylase (318 aa).

Residues 123 to 217 form the Rhodanese domain; that stretch reads EDDDTVIIDA…YGKDPETKGQ (95 aa). C177 (cysteine persulfide intermediate) is an active-site residue.

This sequence belongs to the TrhO family.

The catalysed reaction is uridine(34) in tRNA + AH2 + O2 = 5-hydroxyuridine(34) in tRNA + A + H2O. Catalyzes oxygen-dependent 5-hydroxyuridine (ho5U) modification at position 34 in tRNAs. This Staphylococcus aureus (strain bovine RF122 / ET3-1) protein is tRNA uridine(34) hydroxylase.